Consider the following 404-residue polypeptide: NADH-quinone oxidoreductase subunit D 2 (404 aa).

This sequence belongs to the complex I 49 kDa subunit family. As to quaternary structure, NDH-1 is composed of 14 different subunits. Subunits NuoB, C, D, E, F, and G constitute the peripheral sector of the complex.

The protein localises to the cell inner membrane. The catalysed reaction is a quinone + NADH + 5 H(+)(in) = a quinol + NAD(+) + 4 H(+)(out). Its function is as follows. NDH-1 shuttles electrons from NADH, via FMN and iron-sulfur (Fe-S) centers, to quinones in the respiratory chain. The immediate electron acceptor for the enzyme in this species is believed to be ubiquinone. Couples the redox reaction to proton translocation (for every two electrons transferred, four hydrogen ions are translocated across the cytoplasmic membrane), and thus conserves the redox energy in a proton gradient. The polypeptide is NADH-quinone oxidoreductase subunit D 2 (Rhizobium etli (strain ATCC 51251 / DSM 11541 / JCM 21823 / NBRC 15573 / CFN 42)).